The following is a 75-amino-acid chain: uncharacterized protein (75 aa).

A disordered region spans residues 1-23 (MADAMDLAQLREQEDRERHISNA). Residues 9-20 (QLREQEDRERHI) show a composition bias toward basic and acidic residues. Residues 35–59 (CEECDAPIPEARRRAIPGVQCCVTC) form a dksA C4-type zinc finger.

This is an uncharacterized protein from Escherichia phage 186 (Bacteriophage 186).